Reading from the N-terminus, the 1770-residue chain is Transposon Ty2-GR1 Gag-Pol polyprotein (1770 aa).

Composition is skewed to polar residues over residues 1 to 11 (MESQQLHQNPH), 19 to 39 (ASVT…SASN), and 49 to 60 (KVNSQQETTPGT). Disordered regions lie at residues 1–86 (MESQ…GQYQ) and 360–453 (HSEY…LPDH). An RNA-binding region spans residues 295 to 397 (ENNINVSDRL…SSKPRAAKAH (103 aa)). The span at 369 to 381 (TSPNTTNTKVTTR) shows a compositional bias: low complexity. Polar residues predominate over residues 399–408 (IATSSKFSRV). The For protease activity; shared with dimeric partner role is filled by aspartate 457. Residues 579 to 636 (NVNKSKSVNKYPYPLIHRMLGHANFRSIQKSLKKNAVTYLKESDIEWSNASTYQCPDC) are integrase-type zinc finger-like. An Integrase catalytic domain is found at 656–831 (ESYEPFQYLH…AGLDITTILP (176 aa)). Mg(2+)-binding residues include aspartate 667 and aspartate 732. Disordered stretches follow at residues 1004-1034 (MGGT…STNE), 1059-1135 (TEEP…KSSK), 1146-1165 (LPLP…VSKD), and 1170-1205 (HSRQ…TEIE). 2 stretches are compositionally biased toward polar residues: residues 1009–1034 (ESDT…STNE) and 1065–1082 (QRNS…STPS). A compositionally biased stretch (basic and acidic residues) spans 1151–1165 (LTHKSPTDTSDVSKD). Residues 1193–1227 (KKRSLEDNETEIEVSRDTWNNKNMRSLEPPRSKKR) carry the Bipartite nuclear localization signal motif. Residues 1353–1491 (NDYYITQLDI…DILGLEIKYQ (139 aa)) enclose the Reverse transcriptase Ty1/copia-type domain. Mg(2+)-binding residues include aspartate 1361, aspartate 1442, aspartate 1443, aspartate 1625, glutamate 1667, and aspartate 1700. In terms of domain architecture, RNase H Ty1/copia-type spans 1625 to 1767 (DASYGNQPYY…IKTFKLLTNK (143 aa)).

The capsid protein forms a homotrimer, from which the VLPs are assembled. The protease is a homodimer, whose active site consists of two apposed aspartic acid residues. Initially, virus-like particles (VLPs) are composed of the structural unprocessed proteins Gag and Gag-Pol, and also contain the host initiator methionine tRNA (tRNA(i)-Met) which serves as a primer for minus-strand DNA synthesis, and a dimer of genomic Ty RNA. Processing of the polyproteins occurs within the particle and proceeds by an ordered pathway, called maturation. First, the protease (PR) is released by autocatalytic cleavage of the Gag-Pol polyprotein, and this cleavage is a prerequisite for subsequent processing at the remaining sites to release the mature structural and catalytic proteins. Maturation takes place prior to the RT reaction and is required to produce transposition-competent VLPs.

It localises to the cytoplasm. It is found in the nucleus. It catalyses the reaction DNA(n) + a 2'-deoxyribonucleoside 5'-triphosphate = DNA(n+1) + diphosphate. The catalysed reaction is Endonucleolytic cleavage to 5'-phosphomonoester.. In terms of biological role, capsid protein (CA) is the structural component of the virus-like particle (VLP), forming the shell that encapsulates the retrotransposons dimeric RNA genome. The particles are assembled from trimer-clustered units and there are holes in the capsid shells that allow for the diffusion of macromolecules. CA also has nucleocapsid-like chaperone activity, promoting primer tRNA(i)-Met annealing to the multipartite primer-binding site (PBS), dimerization of Ty2 RNA and initiation of reverse transcription. The aspartyl protease (PR) mediates the proteolytic cleavages of the Gag and Gag-Pol polyproteins after assembly of the VLP. Its function is as follows. Reverse transcriptase/ribonuclease H (RT) is a multifunctional enzyme that catalyzes the conversion of the retro-elements RNA genome into dsDNA within the VLP. The enzyme displays a DNA polymerase activity that can copy either DNA or RNA templates, and a ribonuclease H (RNase H) activity that cleaves the RNA strand of RNA-DNA heteroduplexes during plus-strand synthesis and hydrolyzes RNA primers. The conversion leads to a linear dsDNA copy of the retrotransposon that includes long terminal repeats (LTRs) at both ends. Functionally, integrase (IN) targets the VLP to the nucleus, where a subparticle preintegration complex (PIC) containing at least integrase and the newly synthesized dsDNA copy of the retrotransposon must transit the nuclear membrane. Once in the nucleus, integrase performs the integration of the dsDNA into the host genome. In Saccharomyces cerevisiae (strain ATCC 204508 / S288c) (Baker's yeast), this protein is Transposon Ty2-GR1 Gag-Pol polyprotein (TY2B-GR1).